The sequence spans 148 residues: Putative pre-16S rRNA nuclease (148 aa).

This sequence belongs to the YqgF nuclease family.

Its subcellular location is the cytoplasm. In terms of biological role, could be a nuclease involved in processing of the 5'-end of pre-16S rRNA. The chain is Putative pre-16S rRNA nuclease from Chlamydia trachomatis serovar L2 (strain ATCC VR-902B / DSM 19102 / 434/Bu).